The chain runs to 529 residues: MQDFWHAASAQLESELTPQQFKTWIKPLTPLSFDEQACTLRIAAPNRFKLDWVKSQFSGRIQSLACDYWEATVDVQFVLDPSAGQRQAALQPALAPVPMQPLGAQAGQPRQAMPAGNGVSHDAATLRPAPSVYRETALATASHAAADIDVPVMDAAEVSARSYRMPPQAPAVVATLAAPPQAHVDDSVHERSRLNQILTFDNFVTGKANQLARAAAIQVANNPGKSYNPLYLYGGVGLGKTHLIHAIGNFMLMENPRARIRYIHAEQYVSDVVKAYQRKAFDDFKRYYHSLDLLLIDDIQFFSGKNRTQEEFFYAFEALIANRAQVIITSDTYPKEITGIDDRLISRFDSGLTVAIEPPELEMRVAILMKKAQAENVTVPEEVAFFVAKHLRSNVRELEGALRKILAYSNFHGKEITIEVTREALKDLLTVQNRQISVENIQKTCADFYNIKVADMYSKKRPANIARPRQIAMYLAKELTQKSLPEIGELFGGRDHTTVLHAVRKIADERTKDAQLNHELHVLEQTLKG.

The domain I, interacts with DnaA modulators stretch occupies residues 1 to 72; it reads MQDFWHAASA…SLACDYWEAT (72 aa). Residues 72–192 are domain II; it reads TVDVQFVLDP…HVDDSVHERS (121 aa). The tract at residues 193–409 is domain III, AAA+ region; it reads RLNQILTFDN…GALRKILAYS (217 aa). 4 residues coordinate ATP: glycine 237, glycine 239, lysine 240, and threonine 241. Residues 410–529 form a domain IV, binds dsDNA region; that stretch reads NFHGKEITIE…LHVLEQTLKG (120 aa).

The protein belongs to the DnaA family. Oligomerizes as a right-handed, spiral filament on DNA at oriC.

It localises to the cytoplasm. Plays an essential role in the initiation and regulation of chromosomal replication. ATP-DnaA binds to the origin of replication (oriC) to initiate formation of the DNA replication initiation complex once per cell cycle. Binds the DnaA box (a 9 base pair repeat at the origin) and separates the double-stranded (ds)DNA. Forms a right-handed helical filament on oriC DNA; dsDNA binds to the exterior of the filament while single-stranded (ss)DNA is stabiized in the filament's interior. The ATP-DnaA-oriC complex binds and stabilizes one strand of the AT-rich DNA unwinding element (DUE), permitting loading of DNA polymerase. After initiation quickly degrades to an ADP-DnaA complex that is not apt for DNA replication. Binds acidic phospholipids. This chain is Chromosomal replication initiator protein DnaA, found in Ralstonia pickettii (strain 12J).